A 451-amino-acid polypeptide reads, in one-letter code: ATP-dependent protease ATPase subunit HslU (451 aa).

ATP is bound by residues Ile26, 68–73 (GVGKTE), Asp263, Glu328, and Arg400.

The protein belongs to the ClpX chaperone family. HslU subfamily. In terms of assembly, a double ring-shaped homohexamer of HslV is capped on each side by a ring-shaped HslU homohexamer. The assembly of the HslU/HslV complex is dependent on binding of ATP.

The protein resides in the cytoplasm. Its function is as follows. ATPase subunit of a proteasome-like degradation complex; this subunit has chaperone activity. The binding of ATP and its subsequent hydrolysis by HslU are essential for unfolding of protein substrates subsequently hydrolyzed by HslV. HslU recognizes the N-terminal part of its protein substrates and unfolds these before they are guided to HslV for hydrolysis. This Dichelobacter nodosus (strain VCS1703A) protein is ATP-dependent protease ATPase subunit HslU.